A 362-amino-acid polypeptide reads, in one-letter code: Methionine import ATP-binding protein MetN (362 aa).

In terms of domain architecture, ABC transporter spans 2-241; it reads IHIENLSKTY…PRHEVTRAMV (240 aa). 38 to 45 lines the ATP pocket; sequence GPSGAGKS.

This sequence belongs to the ABC transporter superfamily. Methionine importer (TC 3.A.1.24) family. The complex is composed of two ATP-binding proteins (MetN), two transmembrane proteins (MetI) and a solute-binding protein (MetQ).

The protein localises to the cell inner membrane. The enzyme catalyses L-methionine(out) + ATP + H2O = L-methionine(in) + ADP + phosphate + H(+). The catalysed reaction is D-methionine(out) + ATP + H2O = D-methionine(in) + ADP + phosphate + H(+). Functionally, part of the ABC transporter complex MetNIQ involved in methionine import. Responsible for energy coupling to the transport system. This chain is Methionine import ATP-binding protein MetN, found in Bordetella bronchiseptica (strain ATCC BAA-588 / NCTC 13252 / RB50) (Alcaligenes bronchisepticus).